Here is a 283-residue protein sequence, read N- to C-terminus: Elongation factor Ts (283 aa).

The involved in Mg(2+) ion dislocation from EF-Tu stretch occupies residues 80–83; it reads TDFV.

The protein belongs to the EF-Ts family.

It localises to the cytoplasm. Functionally, associates with the EF-Tu.GDP complex and induces the exchange of GDP to GTP. It remains bound to the aminoacyl-tRNA.EF-Tu.GTP complex up to the GTP hydrolysis stage on the ribosome. This chain is Elongation factor Ts, found in Salmonella gallinarum (strain 287/91 / NCTC 13346).